Reading from the N-terminus, the 227-residue chain is Adapter protein MecA 1 (227 aa).

This sequence belongs to the MecA family. Homodimer.

In terms of biological role, enables the recognition and targeting of unfolded and aggregated proteins to the ClpC protease or to other proteins involved in proteolysis. Acts negatively in the development of competence by binding ComK and recruiting it to the ClpCP protease. When overexpressed, inhibits sporulation. Also involved in Spx degradation by ClpC. The chain is Adapter protein MecA 1 (mecA1) from Bacillus cereus (strain ATCC 14579 / DSM 31 / CCUG 7414 / JCM 2152 / NBRC 15305 / NCIMB 9373 / NCTC 2599 / NRRL B-3711).